The primary structure comprises 237 residues: tRNA1(Val) (adenine(37)-N6)-methyltransferase (237 aa).

It belongs to the methyltransferase superfamily. tRNA (adenine-N(6)-)-methyltransferase family.

The protein localises to the cytoplasm. It carries out the reaction adenosine(37) in tRNA1(Val) + S-adenosyl-L-methionine = N(6)-methyladenosine(37) in tRNA1(Val) + S-adenosyl-L-homocysteine + H(+). Functionally, specifically methylates the adenine in position 37 of tRNA(1)(Val) (anticodon cmo5UAC). The protein is tRNA1(Val) (adenine(37)-N6)-methyltransferase of Parabacteroides distasonis (strain ATCC 8503 / DSM 20701 / CIP 104284 / JCM 5825 / NCTC 11152).